Reading from the N-terminus, the 104-residue chain is Co-chaperonin GroES 2 (104 aa).

It belongs to the GroES chaperonin family. As to quaternary structure, heptamer of 7 subunits arranged in a ring. Interacts with the chaperonin GroEL.

The protein resides in the cytoplasm. Its function is as follows. Together with the chaperonin GroEL, plays an essential role in assisting protein folding. The GroEL-GroES system forms a nano-cage that allows encapsulation of the non-native substrate proteins and provides a physical environment optimized to promote and accelerate protein folding. GroES binds to the apical surface of the GroEL ring, thereby capping the opening of the GroEL channel. The chain is Co-chaperonin GroES 2 from Mesorhizobium japonicum (strain LMG 29417 / CECT 9101 / MAFF 303099) (Mesorhizobium loti (strain MAFF 303099)).